The sequence spans 308 residues: Ribosomal RNA large subunit methyltransferase F (308 aa).

This sequence belongs to the methyltransferase superfamily. METTL16/RlmF family.

The protein resides in the cytoplasm. It carries out the reaction adenosine(1618) in 23S rRNA + S-adenosyl-L-methionine = N(6)-methyladenosine(1618) in 23S rRNA + S-adenosyl-L-homocysteine + H(+). In terms of biological role, specifically methylates the adenine in position 1618 of 23S rRNA. This Salmonella heidelberg (strain SL476) protein is Ribosomal RNA large subunit methyltransferase F.